Here is a 531-residue protein sequence, read N- to C-terminus: Na(+)/H(+) antiporter NhaB (531 aa).

Helical transmembrane passes span 23 to 45 (IAIL…VAGW), 66 to 86 (PGGL…SQVL), 97 to 117 (LLLI…LFVF), 130 to 164 (VSLM…FYSI), 206 to 226 (LLMH…VGEP), 244 to 264 (LRMG…CFLV), 307 to 327 (AFVG…VGLI), 352 to 372 (EEAL…GVII), 393 to 413 (LVIF…VFVG), 451 to 471 (ATPN…APLI), and 478 to 498 (MVWM…LAIE).

It belongs to the NhaB Na(+)/H(+) (TC 2.A.34) antiporter family.

Its subcellular location is the cell inner membrane. The enzyme catalyses 2 Na(+)(in) + 3 H(+)(out) = 2 Na(+)(out) + 3 H(+)(in). In terms of biological role, na(+)/H(+) antiporter that extrudes sodium in exchange for external protons. The sequence is that of Na(+)/H(+) antiporter NhaB from Shewanella loihica (strain ATCC BAA-1088 / PV-4).